Here is a 422-residue protein sequence, read N- to C-terminus: Serine/threonine-protein kinase H1 homolog (422 aa).

The tract at residues 35 to 80 (FIKYDGGGEKTGSPSPQGQSQAVAKVSQSPPPANDQPEPADSHRKK) is disordered. Positions 46–62 (GSPSPQGQSQAVAKVSQ) are enriched in polar residues. The Protein kinase domain occupies 96 to 353 (YDIKALIGRG…AGQALKHPWI (258 aa)). ATP is bound by residues 102-110 (IGRGSFSRV) and K125. D216 acts as the Proton acceptor in catalysis. Positions 376–422 (RASSRCHSTKSSQSTRSSRSTKSSKARRLREKELRELNRRYQQQCNG) are disordered. Over residues 384-396 (TKSSQSTRSSRST) the composition is skewed to low complexity. Positions 405-414 (REKELRELNR) are enriched in basic and acidic residues.

The protein belongs to the protein kinase superfamily. CAMK Ser/Thr protein kinase family.

It carries out the reaction L-seryl-[protein] + ATP = O-phospho-L-seryl-[protein] + ADP + H(+). The catalysed reaction is L-threonyl-[protein] + ATP = O-phospho-L-threonyl-[protein] + ADP + H(+). The sequence is that of Serine/threonine-protein kinase H1 homolog (pskh1) from Danio rerio (Zebrafish).